The chain runs to 431 residues: MAFHHNHLSQDLSFNHFTDQHQPPPPQPPPPPPQQQQHFQEAPPPNWLNTALLRSSDNNNNFLNLHTATANTTTASSSDSPSSAAAAAAANQWLSRSSSFLQRNNNNNASIVGDGIDDVTGGADTMIQGEMKTGGGENKNDGGGATAADGVVSWQNARHKAEILSHPLYEQLLSAHVACLRIATPVDQLPRIDAQLAQSQHVVAKYSALGAAAQGLVGDDKELDQFMTHYVLLLCSFKEQLQQHVRVHAMEAVMACWEIEQSLQSLTGVSPGEGMGATMSDDEDEQVESDANMFDGGLDVLGFGPLIPTESERSLMERVRQELKHELKQGYKEKIVDIREEILRKRRAGKLPGDTTSVLKAWWQSHSKWPYPTEEDKARLVQETGLQLKQINNWFINQRKRNWHSNPSSSTVLKNKRKSNAGDNSGRERFA.

The interval 15-47 (NHFTDQHQPPPPQPPPPPPQQQQHFQEAPPPNW) is disordered. A compositionally biased stretch (pro residues) spans 22–34 (QPPPPQPPPPPPQ). An ELK domain is found at 322 to 342 (ELKHELKQGYKEKIVDIREEI). Residues 343–406 (LRKRRAGKLP…NQRKRNWHSN (64 aa)) constitute a DNA-binding region (homeobox; TALE-type). The segment at 402-431 (NWHSNPSSSTVLKNKRKSNAGDNSGRERFA) is disordered. The span at 404–413 (HSNPSSSTVL) shows a compositional bias: polar residues.

Belongs to the TALE/KNOX homeobox family. May form heterodimeric complex with the TALE/BELL proteins. Interacts with OFP1, OFP2, OFP4, OFP12 and OFP14. Interacts with KNATM-B.

Its subcellular location is the nucleus. The polypeptide is Homeobox protein knotted-1-like 3 (KNAT3) (Arabidopsis thaliana (Mouse-ear cress)).